The primary structure comprises 195 residues: Probable septum site-determining protein MinC (195 aa).

This sequence belongs to the MinC family. Interacts with MinD and FtsZ.

Cell division inhibitor that blocks the formation of polar Z ring septums. Rapidly oscillates between the poles of the cell to destabilize FtsZ filaments that have formed before they mature into polar Z rings. Prevents FtsZ polymerization. The sequence is that of Probable septum site-determining protein MinC from Helicobacter pylori (strain G27).